We begin with the raw amino-acid sequence, 390 residues long: Succinate--CoA ligase [ADP-forming] subunit beta (390 aa).

The region spanning 9-248 (KDILRKFGVT…TSEEDPFEVE (240 aa)) is the ATP-grasp domain. ATP-binding positions include lysine 50, 57 to 59 (GRG), glutamate 103, methionine 106, and glutamate 111. Residues asparagine 203 and aspartate 217 each coordinate Mg(2+). Residues asparagine 268 and 325-327 (GIV) each bind substrate.

The protein belongs to the succinate/malate CoA ligase beta subunit family. As to quaternary structure, heterotetramer of two alpha and two beta subunits. The cofactor is Mg(2+).

The enzyme catalyses succinate + ATP + CoA = succinyl-CoA + ADP + phosphate. The catalysed reaction is GTP + succinate + CoA = succinyl-CoA + GDP + phosphate. The protein operates within carbohydrate metabolism; tricarboxylic acid cycle; succinate from succinyl-CoA (ligase route): step 1/1. Functionally, succinyl-CoA synthetase functions in the citric acid cycle (TCA), coupling the hydrolysis of succinyl-CoA to the synthesis of either ATP or GTP and thus represents the only step of substrate-level phosphorylation in the TCA. The beta subunit provides nucleotide specificity of the enzyme and binds the substrate succinate, while the binding sites for coenzyme A and phosphate are found in the alpha subunit. The chain is Succinate--CoA ligase [ADP-forming] subunit beta from Chlorobium chlorochromatii (strain CaD3).